A 1322-amino-acid polypeptide reads, in one-letter code: Phosphoribosylformylglycinamidine synthase (1322 aa).

ATP-binding positions include 307–318 (GASTGSGGEIRD) and Ala678. Mg(2+) is bound by residues Glu718, Asn722, and Asp886. The Glutamine amidotransferase type-1 domain occupies 1069–1322 (MAILREQGVN…MFRNARVNLG (254 aa)). Cys1162 functions as the Nucleophile in the catalytic mechanism. Active-site residues include His1287 and Glu1289.

This sequence in the N-terminal section; belongs to the FGAMS family. In terms of assembly, monomer.

The protein localises to the cytoplasm. It catalyses the reaction N(2)-formyl-N(1)-(5-phospho-beta-D-ribosyl)glycinamide + L-glutamine + ATP + H2O = 2-formamido-N(1)-(5-O-phospho-beta-D-ribosyl)acetamidine + L-glutamate + ADP + phosphate + H(+). The protein operates within purine metabolism; IMP biosynthesis via de novo pathway; 5-amino-1-(5-phospho-D-ribosyl)imidazole from N(2)-formyl-N(1)-(5-phospho-D-ribosyl)glycinamide: step 1/2. Functionally, phosphoribosylformylglycinamidine synthase involved in the purines biosynthetic pathway. Catalyzes the ATP-dependent conversion of formylglycinamide ribonucleotide (FGAR) and glutamine to yield formylglycinamidine ribonucleotide (FGAM) and glutamate. The chain is Phosphoribosylformylglycinamidine synthase from Photobacterium profundum (strain SS9).